The chain runs to 392 residues: Selenide, water dikinase 1 (392 aa).

The active site involves C31. Residues K32, 67-69, D87, D110, and 161-164 contribute to the ATP site; these read GMD and GGQT. Mg(2+) is bound at residue D69. D110 contacts Mg(2+). D265 serves as a coordination point for Mg(2+).

Belongs to the selenophosphate synthase 1 family. Class II subfamily. Homodimer. Mg(2+) serves as cofactor.

The protein resides in the cell membrane. It localises to the nucleus membrane. The enzyme catalyses hydrogenselenide + ATP + H2O = selenophosphate + AMP + phosphate + 2 H(+). Its function is as follows. Synthesizes selenophosphate from selenide and ATP. The protein is Selenide, water dikinase 1 (sephs1) of Xenopus tropicalis (Western clawed frog).